Consider the following 137-residue polypeptide: Large ribosomal subunit protein uL14 (137 aa).

The protein belongs to the universal ribosomal protein uL14 family. Part of the 50S ribosomal subunit. Forms a cluster with proteins L3 and L24e, part of which may contact the 16S rRNA in 2 intersubunit bridges.

In terms of biological role, binds to 23S rRNA. Forms part of two intersubunit bridges in the 70S ribosome. The protein is Large ribosomal subunit protein uL14 of Ignicoccus hospitalis (strain KIN4/I / DSM 18386 / JCM 14125).